Reading from the N-terminus, the 44-residue chain is Protein PsbN (44 aa).

Residues 6–26 (FFFTFFLWFLLLSVTGYSVYV) form a helical membrane-spanning segment.

This sequence belongs to the PsbN family.

The protein localises to the plastid. It localises to the chloroplast thylakoid membrane. Functionally, may play a role in photosystem I and II biogenesis. This chain is Protein PsbN, found in Chlamydomonas reinhardtii (Chlamydomonas smithii).